The sequence spans 167 residues: Transcription antitermination protein NusB (167 aa).

It belongs to the NusB family.

Involved in transcription antitermination. Required for transcription of ribosomal RNA (rRNA) genes. Binds specifically to the boxA antiterminator sequence of the ribosomal RNA (rrn) operons. This is Transcription antitermination protein NusB from Nitrosomonas europaea (strain ATCC 19718 / CIP 103999 / KCTC 2705 / NBRC 14298).